The primary structure comprises 169 residues: Peptide deformylase (169 aa).

The Fe cation site is built by Cys91 and His133. Glu134 is an active-site residue. Fe cation is bound at residue His137.

The protein belongs to the polypeptide deformylase family. The cofactor is Fe(2+).

It carries out the reaction N-terminal N-formyl-L-methionyl-[peptide] + H2O = N-terminal L-methionyl-[peptide] + formate. Removes the formyl group from the N-terminal Met of newly synthesized proteins. Requires at least a dipeptide for an efficient rate of reaction. N-terminal L-methionine is a prerequisite for activity but the enzyme has broad specificity at other positions. The protein is Peptide deformylase of Pectobacterium atrosepticum (strain SCRI 1043 / ATCC BAA-672) (Erwinia carotovora subsp. atroseptica).